A 308-amino-acid polypeptide reads, in one-letter code: Glutaminase (308 aa).

Substrate-binding residues include serine 66, asparagine 117, glutamate 161, asparagine 168, tyrosine 192, tyrosine 244, and valine 262.

It belongs to the glutaminase family. As to quaternary structure, homotetramer.

The enzyme catalyses L-glutamine + H2O = L-glutamate + NH4(+). This chain is Glutaminase, found in Klebsiella pneumoniae subsp. pneumoniae (strain ATCC 700721 / MGH 78578).